Consider the following 627-residue polypeptide: MAHVGNYSRNGYYPYYNNKFCGNFTELMYLIIVEKNRSDGYSNIKKHLVDNIETINYRNEKGWTALMIACAMCDKWSSFKTIRLLLKKGADVHIENNKGRTVLSLMVNIITENKFNIMDLLIDKGADINSQDNKNKTPLIHACKKELDDTYLHACYVLGKSVDPNLEKNDSKTVRYLLDKGADPNIEEHYGKTVLFYAARMKNQDKAYEISKTLIERGGNANHTNHYAETVLIYLCISCSHYSCELIQLLLDNGVDINHQNRIGFTALMCACINIKNPSNFETIKFMLDKGANINLKNNDGFTAFMNIFGNNYFDYIVPVIQIMLDYGADINDKNNNNVTVLMMAVKFAKNDKNMTVINFLLDKGADLEIRNDYDWTALFYACRYSNSSGNNDAVKLLLDYGANVNVNTLLGHTPLIIACQYADNESNIDTVKLLLEYGANPNLTNLDKNTALSVAITWLSKNRYEVVKLLLYYHADSNTYLYLNSEGTVREYNLLVWIVKNIKCNKLDLLMLLIEHGANYSDIKGYIFQENLDNGDIEKFMKFTNIMENIKLVKKSIIDCIPKRVPEIIFNTNSMISQLLSLKWKAYSSDYKDLITLKDLDIIDYLGVYDIDSLYDRIIDITKYAY.

ANK repeat units lie at residues 61-94, 98-130, 153-186, 190-223, 228-259, 263-296, 300-333, 337-370, 374-407, 411-444, 448-480, and 491-523; these read KGWTALMIACAMCDKWSSFKTIRLLLKKGADVHI, KGRTVLSLMVNIITENKFNIMDLLIDKGADINS, HACYVLGKSVDPNLEKNDSKTVRYLLDKGADPNI, YGKTVLFYAARMKNQDKAYEISKTLIERGGNANH, AETVLIYLCISCSHYSCELIQLLLDNGVDINH, IGFTALMCACINIKNPSNFETIKFMLDKGANINL, DGFTAFMNIFGNNYFDYIVPVIQIMLDYGADIND, NNVTVLMMAVKFAKNDKNMTVINFLLDKGADLEI, YDWTALFYACRYSNSSGNNDAVKLLLDYGANVNV, LGHTPLIIACQYADNESNIDTVKLLLEYGANPNL, DKNTALSVAITWLSKNRYEVVKLLLYYHADSNT, and REYNLLVWIVKNIKCNKLDLLMLLIEHGANYSD.

This Acanthamoeba polyphaga (Amoeba) protein is Putative ankyrin repeat protein L122.